The following is a 655-amino-acid chain: FYVE, RhoGEF and PH domain-containing protein 2 (655 aa).

Phosphoserine is present on residues serine 11 and serine 48. The disordered stretch occupies residues 18–64 (VFENSRTPEAAPRGQRLEDVHHRPECRPPESPGPREKTNVGEAVGSE). A compositionally biased stretch (basic and acidic residues) spans 32-56 (QRLEDVHHRPECRPPESPGPREKTN). Residues 102 to 290 (PEKKIVQELL…FSAAQHSNAA (189 aa)) enclose the DH domain. In terms of domain architecture, PH 1 spans 319–418 (TLLREGPVLK…WMQAFQAAID (100 aa)). The FYVE-type zinc finger occupies 458-518 (DKMVTMCMRC…VCLHCYAFLT (61 aa)). The Zn(2+) site is built by cysteine 464, cysteine 467, cysteine 481, cysteine 484, cysteine 489, cysteine 492, cysteine 510, and cysteine 513. Positions 544–641 (QSLMCSFLQL…WVKAMERAAS (98 aa)) constitute a PH 2 domain. Serine 654 is subject to Phosphoserine.

The protein resides in the cytoplasm. The protein localises to the cytoskeleton. It localises to the nucleus. It is found in the early endosome. Its subcellular location is the early endosome membrane. The protein resides in the cell projection. The protein localises to the ruffle membrane. In terms of biological role, activates CDC42, a member of the Ras-like family of Rho- and Rac proteins, by exchanging bound GDP for free GTP. Activates JNK1 via CDC42 but not RAC1. Binds to phosphatidylinositol 4,5-bisphosphate, phosphatidylinositol 3,4,5-trisphosphate, phosphatidylinositol 5-monophosphate, phosphatidylinositol 4-monophosphate and phosphatidylinositol 3-monophosphate. The chain is FYVE, RhoGEF and PH domain-containing protein 2 (FGD2) from Homo sapiens (Human).